The following is an 84-amino-acid chain: UPF0473 protein CKL_1327 (84 aa).

The protein belongs to the UPF0473 family.

This is UPF0473 protein CKL_1327 from Clostridium kluyveri (strain ATCC 8527 / DSM 555 / NBRC 12016 / NCIMB 10680 / K1).